A 394-amino-acid chain; its full sequence is 8-amino-7-oxononanoate synthase (394 aa).

Arg-21 is a substrate binding site. 112-113 serves as a coordination point for pyridoxal 5'-phosphate; that stretch reads GY. Position 137 (His-137) interacts with substrate. 3 residues coordinate pyridoxal 5'-phosphate: Ser-183, His-211, and Thr-239. N6-(pyridoxal phosphate)lysine is present on Lys-242. Thr-358 is a substrate binding site.

Belongs to the class-II pyridoxal-phosphate-dependent aminotransferase family. BioF subfamily. In terms of assembly, homodimer. The cofactor is pyridoxal 5'-phosphate.

The enzyme catalyses 6-carboxyhexanoyl-[ACP] + L-alanine + H(+) = (8S)-8-amino-7-oxononanoate + holo-[ACP] + CO2. Its pathway is cofactor biosynthesis; biotin biosynthesis. Functionally, catalyzes the decarboxylative condensation of pimeloyl-[acyl-carrier protein] and L-alanine to produce 8-amino-7-oxononanoate (AON), [acyl-carrier protein], and carbon dioxide. In Burkholderia cenocepacia (strain ATCC BAA-245 / DSM 16553 / LMG 16656 / NCTC 13227 / J2315 / CF5610) (Burkholderia cepacia (strain J2315)), this protein is 8-amino-7-oxononanoate synthase.